Here is a 207-residue protein sequence, read N- to C-terminus: Holliday junction branch migration complex subunit RuvA (207 aa).

Positions 1-64 are domain I; it reads MIGLISGQVQ…EDAQLLYGFI (64 aa). Residues 65–143 are domain II; the sequence is DRKERDVFRQ…NIEVDNSNLE (79 aa). The segment at 144–152 is flexible linker; that stretch reads FAIQPAPIS. The segment at 153–207 is domain III; the sequence is AEDSIIAEVEGALMSLGYKEKEAQQAIKAAKSNGETFADTQSLLKATLQQFQSFK.

This sequence belongs to the RuvA family. As to quaternary structure, homotetramer. Forms an RuvA(8)-RuvB(12)-Holliday junction (HJ) complex. HJ DNA is sandwiched between 2 RuvA tetramers; dsDNA enters through RuvA and exits via RuvB. An RuvB hexamer assembles on each DNA strand where it exits the tetramer. Each RuvB hexamer is contacted by two RuvA subunits (via domain III) on 2 adjacent RuvB subunits; this complex drives branch migration. In the full resolvosome a probable DNA-RuvA(4)-RuvB(12)-RuvC(2) complex forms which resolves the HJ.

Its subcellular location is the cytoplasm. The RuvA-RuvB-RuvC complex processes Holliday junction (HJ) DNA during genetic recombination and DNA repair, while the RuvA-RuvB complex plays an important role in the rescue of blocked DNA replication forks via replication fork reversal (RFR). RuvA specifically binds to HJ cruciform DNA, conferring on it an open structure. The RuvB hexamer acts as an ATP-dependent pump, pulling dsDNA into and through the RuvAB complex. HJ branch migration allows RuvC to scan DNA until it finds its consensus sequence, where it cleaves and resolves the cruciform DNA. The sequence is that of Holliday junction branch migration complex subunit RuvA from Psychrobacter arcticus (strain DSM 17307 / VKM B-2377 / 273-4).